We begin with the raw amino-acid sequence, 75 residues long: Small ribosomal subunit protein bS18 (75 aa).

It belongs to the bacterial ribosomal protein bS18 family. As to quaternary structure, part of the 30S ribosomal subunit. Forms a tight heterodimer with protein bS6.

In terms of biological role, binds as a heterodimer with protein bS6 to the central domain of the 16S rRNA, where it helps stabilize the platform of the 30S subunit. This Clostridioides difficile (strain 630) (Peptoclostridium difficile) protein is Small ribosomal subunit protein bS18.